Reading from the N-terminus, the 506-residue chain is Arylsulfatase A (506 aa).

The first 17 residues, 1 to 17 (MALGTLFLALAAGLSTA), serve as a signal peptide directing secretion. Ca(2+) contacts are provided by Asp-28, Asp-29, and Cys-68. Cys-68 serves as the catalytic Nucleophile. Cys-68 bears the 3-oxoalanine (Cys) mark. Lys-122 contributes to the substrate binding site. The active site involves His-124. Ser-149 contacts substrate. 2 disulfides stabilise this stretch: Cys-155–Cys-171 and Cys-160–Cys-167. N-linked (GlcNAc...) asparagine glycosylation is present at Asn-157. Asn-183 carries N-linked (GlcNAc...) asparagine glycosylation. Residue His-228 coordinates substrate. Residues Asp-280 and Asn-281 each coordinate Ca(2+). Intrachain disulfides connect Cys-299/Cys-413, Cys-487/Cys-499, Cys-488/Cys-501, and Cys-492/Cys-498. Lys-301 lines the substrate pocket. Asn-349 carries N-linked (GlcNAc...) asparagine glycosylation.

The protein belongs to the sulfatase family. As to quaternary structure, homodimer at neutral pH and homooctamer at acidic pH. Exists both as a single chain of 58 kDa (component A) or as a chain of 50 kDa (component B) linked by disulfide bond(s) to a 7 kDa chain (component C). Interacts with SUMF1. Ca(2+) serves as cofactor. Post-translationally, the conversion to 3-oxoalanine (also known as C-formylglycine, FGly), of a serine or cysteine residue in prokaryotes and of a cysteine residue in eukaryotes, is critical for catalytic activity. This post-translational modification is severely defective in multiple sulfatase deficiency (MSD).

The protein resides in the endoplasmic reticulum. It is found in the lysosome. It carries out the reaction an N-acyl-1-beta-D-(3-O-sulfo)-galactosyl-sphing-4-enine + H2O = a beta-D-galactosyl-(1&lt;-&gt;1')-N-acylsphing-4-enine + sulfate + H(+). Functionally, hydrolyzes cerebroside sulfate. This is Arylsulfatase A (Arsa) from Mus musculus (Mouse).